The primary structure comprises 236 residues: CHD1 helical C-terminal domain containing protein 1 (236 aa).

Residues 1-29 (MEASDWQGGEGDKPLEKVGSVPCLERSSS) form a disordered region. Residues 44–145 (LSQDTFKICK…TNQTAKFLAA (102 aa)) form a CHD1 helical C-terminal domain (CHCT) region. Positions 197–236 (LEEPRSSHCSRGDSLRKLPQKPKLKKKRIKERLESPKSCS) are disordered. Residues 198 to 212 (EEPRSSHCSRGDSLR) are compositionally biased toward basic and acidic residues. Over residues 214–226 (LPQKPKLKKKRIK) the composition is skewed to basic residues. A compositionally biased stretch (basic and acidic residues) spans 227–236 (ERLESPKSCS).

Exclusively expressed in testes.

It localises to the cytoplasm. The protein resides in the nucleus. In terms of biological role, may play a role in regulation of apoptosis. The protein is CHD1 helical C-terminal domain containing protein 1 (Chct1) of Mus musculus (Mouse).